The primary structure comprises 913 residues: Proline and serine-rich protein 1 (913 aa).

At M1 the chain carries N-acetylmethionine. Disordered stretches follow at residues 233–291 (VPPP…PAVS), 488–507 (ASLS…ATNK), 592–618 (SEPT…TLGL), and 888–913 (DGFP…SGWQ). Residues 251-275 (LSSQSKPTQSQTFSTPASQLFSPHG) are compositionally biased toward polar residues. Residues 276-291 (SSNPSTPAATPVPAVS) show a composition bias toward low complexity. Positions 488–506 (ASLSSLPNRNSDSPASATN) are enriched in polar residues. Residues 893–913 (YPSTPGTPFSLQTGLSQSGWQ) show a composition bias toward polar residues.

As to quaternary structure, interacts with TET2 and OGT; this interaction mediates TET2 O-GlcNAcylation and stability by promoting the interaction between OGT and TET2. Interacts with KDM6A. Interacts with TET1. Glycosylated. Interaction with OGT leads to GlcNAcylation.

Mediates OGT interaction with and O-GlcNAcylation of TET2 to control TET2 stabilization at enhancers and CpG islands (CGIs). The polypeptide is Proline and serine-rich protein 1 (Mus musculus (Mouse)).